The sequence spans 478 residues: Probable sodium/glutamine symporter GlnT (478 aa).

Helical transmembrane passes span 14-34, 85-105, 145-165, 185-205, 211-231, 236-256, 298-318, 342-362, 381-401, and 411-431; these read DLLW…YFTF, IAIA…IIAI, WMGA…FNSV, LGLI…KRIA, IVVV…FSNI, GVLA…GGAL, AFGV…IILF, GSWA…CALI, LIFV…VAKV, and FMGL…KVVF.

Belongs to the alanine or glycine:cation symporter (AGCS) (TC 2.A.25) family.

The protein resides in the cell membrane. In terms of biological role, probably functions as a sodium/glutamine symporter for glutamine uptake. The protein is Probable sodium/glutamine symporter GlnT (glnT) of Bacillus subtilis (strain 168).